A 132-amino-acid polypeptide reads, in one-letter code: Small ribosomal subunit protein uS8 (132 aa).

Belongs to the universal ribosomal protein uS8 family. Part of the 30S ribosomal subunit. Contacts proteins S5 and S12.

Its function is as follows. One of the primary rRNA binding proteins, it binds directly to 16S rRNA central domain where it helps coordinate assembly of the platform of the 30S subunit. The polypeptide is Small ribosomal subunit protein uS8 (Xylella fastidiosa (strain M23)).